The chain runs to 510 residues: NAD(P)H-quinone oxidoreductase subunit 2, chloroplastic (510 aa).

11 helical membrane passes run 24–44, 59–79, 99–119, 124–144, 149–169, 183–203, 295–315, 323–343, 347–367, 395–415, and 418–438; these read LLLFHGSFIFPECILIFGLIL, WFYFISSTSLVMSITALLFRW, IFQFLILLCSTLCIPLSVEYI, MAITEFLLFVLTATLGGMFLC, LITIFVAPECFSLCSYLLSGY, YLLMGGASSSILVHGFSWLYG, WHLLLEILAILSMILGNLIAI, MLAYSSIGQIGYVIIGIIVGD, GYASMITYMLFYISMNLGTFA, ALSSALCLLSLGGLPPLAGFF, and LHLFWCGWQAGLYFLVSIGLL.

The protein belongs to the complex I subunit 2 family. NDH is composed of at least 16 different subunits, 5 of which are encoded in the nucleus.

Its subcellular location is the plastid. It is found in the chloroplast thylakoid membrane. The enzyme catalyses a plastoquinone + NADH + (n+1) H(+)(in) = a plastoquinol + NAD(+) + n H(+)(out). It catalyses the reaction a plastoquinone + NADPH + (n+1) H(+)(in) = a plastoquinol + NADP(+) + n H(+)(out). In terms of biological role, NDH shuttles electrons from NAD(P)H:plastoquinone, via FMN and iron-sulfur (Fe-S) centers, to quinones in the photosynthetic chain and possibly in a chloroplast respiratory chain. The immediate electron acceptor for the enzyme in this species is believed to be plastoquinone. Couples the redox reaction to proton translocation, and thus conserves the redox energy in a proton gradient. The sequence is that of NAD(P)H-quinone oxidoreductase subunit 2, chloroplastic from Maianthemum racemosum (False Solomon's-seal).